The following is a 618-amino-acid chain: DNA mismatch repair protein MutL (618 aa).

A compositionally biased stretch (low complexity) spans 367 to 381 (EPTAAREPATPRYSG). The segment at 367–402 (EPTAAREPATPRYSGGASGGNGGRQSAGGWPHAQPG) is disordered. The span at 382 to 392 (GASGGNGGRQS) shows a compositional bias: gly residues.

Belongs to the DNA mismatch repair MutL/HexB family.

In terms of biological role, this protein is involved in the repair of mismatches in DNA. It is required for dam-dependent methyl-directed DNA mismatch repair. May act as a 'molecular matchmaker', a protein that promotes the formation of a stable complex between two or more DNA-binding proteins in an ATP-dependent manner without itself being part of a final effector complex. In Salmonella gallinarum (strain 287/91 / NCTC 13346), this protein is DNA mismatch repair protein MutL.